The primary structure comprises 481 residues: 3-isopropylmalate dehydratase large subunit (481 aa).

Cysteine 363, cysteine 423, and cysteine 426 together coordinate [4Fe-4S] cluster. A disordered region spans residues 434–465 (LRPGQRAASTSNRNFEGRQGRGGRTHLVSPPV).

The protein belongs to the aconitase/IPM isomerase family. LeuC type 1 subfamily. As to quaternary structure, heterodimer of LeuC and LeuD. The cofactor is [4Fe-4S] cluster.

It catalyses the reaction (2R,3S)-3-isopropylmalate = (2S)-2-isopropylmalate. The protein operates within amino-acid biosynthesis; L-leucine biosynthesis; L-leucine from 3-methyl-2-oxobutanoate: step 2/4. Catalyzes the isomerization between 2-isopropylmalate and 3-isopropylmalate, via the formation of 2-isopropylmaleate. In Salinispora tropica (strain ATCC BAA-916 / DSM 44818 / JCM 13857 / NBRC 105044 / CNB-440), this protein is 3-isopropylmalate dehydratase large subunit.